The following is a 99-amino-acid chain: Small ribosomal subunit protein uS14c (99 aa).

The protein belongs to the universal ribosomal protein uS14 family. As to quaternary structure, part of the 30S ribosomal subunit.

The protein localises to the plastid. It is found in the chloroplast. Binds 16S rRNA, required for the assembly of 30S particles. This Welwitschia mirabilis (Tree tumbo) protein is Small ribosomal subunit protein uS14c.